A 349-amino-acid chain; its full sequence is Protein RecA (349 aa).

Residue 65–72 (GPESSGKT) participates in ATP binding. The segment at 329 to 349 (FDGDVDENENEDDSPKTLFDE) is disordered. Positions 331 to 340 (GDVDENENED) are enriched in acidic residues.

This sequence belongs to the RecA family.

It is found in the cytoplasm. Can catalyze the hydrolysis of ATP in the presence of single-stranded DNA, the ATP-dependent uptake of single-stranded DNA by duplex DNA, and the ATP-dependent hybridization of homologous single-stranded DNAs. It interacts with LexA causing its activation and leading to its autocatalytic cleavage. This Staphylococcus epidermidis (strain ATCC 35984 / DSM 28319 / BCRC 17069 / CCUG 31568 / BM 3577 / RP62A) protein is Protein RecA.